A 137-amino-acid chain; its full sequence is Gonadotropin subunit beta-1 (137 aa).

Positions 1–24 are cleaved as a signal peptide; the sequence is MYCTHLKTLQLVVMATLWVTPVRA. 5 cysteine pairs are disulfide-bonded: C32/C78, C46/C93, C55/C108, C59/C110, and C113/C120. N36 carries N-linked (GlcNAc...) asparagine glycosylation.

This sequence belongs to the glycoprotein hormones subunit beta family. Heterodimer of an alpha and a beta chain.

Its subcellular location is the secreted. In terms of biological role, involved in gametogenesis and steroidogenesis. The polypeptide is Gonadotropin subunit beta-1 (cgba) (Oncorhynchus masou (Cherry salmon)).